The chain runs to 173 residues: Photosystem I assembly protein Ycf3 (173 aa).

TPR repeat units follow at residues 35–68, 72–105, and 120–153; these read AFAYYRDGMSAQADGEYAEALENYQEALTLEEDP, SFILYNIALVHTSNGDHQTALDHYLQALDLNPKM, and GQRSEEAGNDDEAERHYDQAAEYWTQAIRLAPNN.

This sequence belongs to the Ycf3 family.

Its subcellular location is the cellular thylakoid membrane. Its function is as follows. Essential for the assembly of the photosystem I (PSI) complex. May act as a chaperone-like factor to guide the assembly of the PSI subunits. This Synechococcus elongatus (strain ATCC 33912 / PCC 7942 / FACHB-805) (Anacystis nidulans R2) protein is Photosystem I assembly protein Ycf3.